A 262-amino-acid chain; its full sequence is Adenosine deaminase RL5 (262 aa).

Cu cation contacts are provided by N36, Y40, M68, H73, C75, N114, C118, H135, C172, C175, C234, and C237.

This sequence belongs to the purine nucleoside phosphorylase YfiH/LACC1 family. Homodimer. Requires Cu cation as cofactor.

The catalysed reaction is adenosine + phosphate = alpha-D-ribose 1-phosphate + adenine. It carries out the reaction S-methyl-5'-thioadenosine + phosphate = 5-(methylsulfanyl)-alpha-D-ribose 1-phosphate + adenine. The enzyme catalyses inosine + phosphate = alpha-D-ribose 1-phosphate + hypoxanthine. It catalyses the reaction adenosine + H2O + H(+) = inosine + NH4(+). Functionally, purine nucleoside enzyme that catalyzes the phosphorolysis of adenosine and inosine nucleosides, yielding D-ribose 1-phosphate and the respective free bases, adenine and hypoxanthine. Also catalyzes the phosphorolysis of S-methyl-5'-thioadenosine into adenine and S-methyl-5-thio-alpha-D-ribose 1-phosphate. Also has adenosine deaminase activity. Also acts as a multicopper oxidase able to oxidize a wide variety of polyphenols and related compounds in vitro. Displays substrate preference as follows: syringaldazine &gt; 2,6-dimethoxyphenol &gt; veratryl alcohol &gt; guaiacol &gt; tetramethylbenzidine &gt; 4-methoxybenzyl alcohol &gt; 2,2'-azino-bis(3-ethylbenzthiazoline-6-sulfonic acid) (ABTS) &gt;&gt; phenol red &gt; 1-hydroxybenzotriazole. Cannot use 3,4-dimetoxybenzyl alcohol and violuric acid as substrates. As this enzyme is derived from a rumen microbial community, it may have a role in the digestion of complex plant materials such as ryegrass lignin. This Unknown prokaryotic organism protein is Adenosine deaminase RL5.